Reading from the N-terminus, the 243-residue chain is Small ribosomal subunit protein uS2c (243 aa).

The disordered stretch occupies residues 224-243; the sequence is GNNGKVSSDQEDTQELQTVQ.

Belongs to the universal ribosomal protein uS2 family.

The protein resides in the plastid. It is found in the chloroplast. The polypeptide is Small ribosomal subunit protein uS2c (rps2) (Rhodomonas salina (Cryptomonas salina)).